The chain runs to 92 residues: Small ribosomal subunit protein uS19c (92 aa).

It belongs to the universal ribosomal protein uS19 family.

It localises to the plastid. It is found in the chloroplast. Protein S19 forms a complex with S13 that binds strongly to the 16S ribosomal RNA. This chain is Small ribosomal subunit protein uS19c, found in Panax ginseng (Korean ginseng).